The chain runs to 173 residues: uncharacterized protein (173 aa).

A disordered region spans residues 80–107 (HSATVKRTDSSHRLKSHVVDKRPRRSLD). Residues 85–107 (KRTDSSHRLKSHVVDKRPRRSLD) are compositionally biased toward basic and acidic residues.

This is an uncharacterized protein from Autographa californica nuclear polyhedrosis virus (AcMNPV).